Consider the following 628-residue polypeptide: Biosynthetic arginine decarboxylase (628 aa).

K99 is modified (N6-(pyridoxal phosphate)lysine). Residue 279-289 coordinates substrate; it reads VDVGGGLGIDY.

The protein belongs to the Orn/Lys/Arg decarboxylase class-II family. SpeA subfamily. Mg(2+) is required as a cofactor. The cofactor is pyridoxal 5'-phosphate.

The enzyme catalyses L-arginine + H(+) = agmatine + CO2. In terms of biological role, catalyzes the biosynthesis of agmatine from arginine. The chain is Biosynthetic arginine decarboxylase from Xylella fastidiosa (strain 9a5c).